The sequence spans 357 residues: Alanine racemase (357 aa).

K33 acts as the Proton acceptor; specific for D-alanine in catalysis. K33 is subject to N6-(pyridoxal phosphate)lysine. Substrate is bound at residue R129. The Proton acceptor; specific for L-alanine role is filled by Y253. M301 contributes to the substrate binding site.

Belongs to the alanine racemase family. Pyridoxal 5'-phosphate is required as a cofactor.

The enzyme catalyses L-alanine = D-alanine. The protein operates within amino-acid biosynthesis; D-alanine biosynthesis; D-alanine from L-alanine: step 1/1. Its function is as follows. Catalyzes the interconversion of L-alanine and D-alanine. May also act on other amino acids. The sequence is that of Alanine racemase (alr) from Pseudomonas savastanoi pv. phaseolicola (strain 1448A / Race 6) (Pseudomonas syringae pv. phaseolicola (strain 1448A / Race 6)).